The sequence spans 312 residues: Ribosomal RNA small subunit methyltransferase H (312 aa).

S-adenosyl-L-methionine is bound by residues 35 to 37 (GGH), D54, F81, D100, and Q107.

Belongs to the methyltransferase superfamily. RsmH family.

The protein localises to the cytoplasm. The enzyme catalyses cytidine(1402) in 16S rRNA + S-adenosyl-L-methionine = N(4)-methylcytidine(1402) in 16S rRNA + S-adenosyl-L-homocysteine + H(+). Specifically methylates the N4 position of cytidine in position 1402 (C1402) of 16S rRNA. The sequence is that of Ribosomal RNA small subunit methyltransferase H from Campylobacter jejuni subsp. jejuni serotype O:2 (strain ATCC 700819 / NCTC 11168).